A 193-amino-acid polypeptide reads, in one-letter code: Holliday junction branch migration complex subunit RuvA (193 aa).

The tract at residues 1 to 64 (MIGRIAGILL…EDAHLLYGFL (64 aa)) is domain I. The tract at residues 65-139 (TPQERTTFRE…GKLGADLGAL (75 aa)) is domain II. The flexible linker stretch occupies residues 139–143 (LAGAA). The interval 144 to 193 (SQSDHATDILNALVALGYSEKEGLAAIKNVPAGTGVSEGIKLALKALSKV) is domain III.

The protein belongs to the RuvA family. In terms of assembly, homotetramer. Forms an RuvA(8)-RuvB(12)-Holliday junction (HJ) complex. HJ DNA is sandwiched between 2 RuvA tetramers; dsDNA enters through RuvA and exits via RuvB. An RuvB hexamer assembles on each DNA strand where it exits the tetramer. Each RuvB hexamer is contacted by two RuvA subunits (via domain III) on 2 adjacent RuvB subunits; this complex drives branch migration. In the full resolvosome a probable DNA-RuvA(4)-RuvB(12)-RuvC(2) complex forms which resolves the HJ.

It is found in the cytoplasm. The RuvA-RuvB-RuvC complex processes Holliday junction (HJ) DNA during genetic recombination and DNA repair, while the RuvA-RuvB complex plays an important role in the rescue of blocked DNA replication forks via replication fork reversal (RFR). RuvA specifically binds to HJ cruciform DNA, conferring on it an open structure. The RuvB hexamer acts as an ATP-dependent pump, pulling dsDNA into and through the RuvAB complex. HJ branch migration allows RuvC to scan DNA until it finds its consensus sequence, where it cleaves and resolves the cruciform DNA. This is Holliday junction branch migration complex subunit RuvA from Burkholderia ambifaria (strain MC40-6).